Here is a 123-residue protein sequence, read N- to C-terminus: MEVLGITEKALNYYRENVKDNKTITPDQALLKMIRNVLLVKETHPERVKKRLFCTEYAYGNMIIKVNRKKQVFEIVNKSGCFSDQNDWKFPKRRYIELSKELGIKDCKFRKITYSKKNHNKQK.

The polypeptide is SPbeta prophage-derived uncharacterized protein YorE (yorE) (Bacillus subtilis (strain 168)).